Consider the following 388-residue polypeptide: Chorismate synthase (388 aa).

Arg39 and Arg45 together coordinate NADP(+). Residues 130-132 (RSS), 251-252 (NA), Ala296, 311-315 (KPIPT), and Arg337 each bind FMN.

This sequence belongs to the chorismate synthase family. In terms of assembly, homotetramer. FMNH2 serves as cofactor.

The enzyme catalyses 5-O-(1-carboxyvinyl)-3-phosphoshikimate = chorismate + phosphate. It functions in the pathway metabolic intermediate biosynthesis; chorismate biosynthesis; chorismate from D-erythrose 4-phosphate and phosphoenolpyruvate: step 7/7. Its function is as follows. Catalyzes the anti-1,4-elimination of the C-3 phosphate and the C-6 proR hydrogen from 5-enolpyruvylshikimate-3-phosphate (EPSP) to yield chorismate, which is the branch point compound that serves as the starting substrate for the three terminal pathways of aromatic amino acid biosynthesis. This reaction introduces a second double bond into the aromatic ring system. The chain is Chorismate synthase from Streptococcus equi subsp. zooepidemicus (strain MGCS10565).